Reading from the N-terminus, the 559-residue chain is Non-homologous end joining factor IFFO1 (559 aa).

Residues 21–57 form a disordered region; that stretch reads GPLGDSLGGDHFAGGGDLPPAPLSPAGPAAYSPPGPG. The segment covering 39–57 has biased composition (pro residues); it reads PPAPLSPAGPAAYSPPGPG. The interval 65-116 is LMNA binding; it reads ALRNDLGSNINVLKTLNLRFRCFLAKVHELERRNRLLEKQLQQALEEGKQGR. The IF rod domain occupies 73–526; it reads NINVLKTLNL…RLITQSGDRK (454 aa). Residues 85–117 adopt a coiled-coil conformation; that stretch reads RCFLAKVHELERRNRLLEKQLQQALEEGKQGRR. The disordered stretch occupies residues 158 to 187; sequence SPARSPAGPLAPSAASLSSSSTSTSTTYSS. Positions 237–301 form a coiled coil; sequence EIRALYNVLA…LKVEQLKAEL (65 aa). The tract at residues 360 to 394 is disordered; sequence SMGGRKRERKAAVEEDTSLSESEGPRQPDGDEEES. The XCCR4 binding. Required for localization to the double-strand breaks (DSBs) stretch occupies residues 450–525; that stretch reads EQEDSLEKVI…RRLITQSGDR (76 aa). A coiled-coil region spans residues 455 to 501; the sequence is LEKVIKDTESLFKTREKEYQETIDQIELELATAKNDMNRHLHEYMEM. Residues 520-559 form a disordered region; that stretch reads TQSGDRKSPAFTAVPLSDPPPPPSEAEDSDRDVSSDSSMR. Residues 550–559 are compositionally biased toward basic and acidic residues; it reads RDVSSDSSMR.

It belongs to the intermediate filament family. As to quaternary structure, forms a heterotetramer with XRCC4. The interaction with XRCC4 is direct, involves LIG4-free XRCC4 and leads to relocalization of IFFO1 at the double-strand break (DSB) sites. Interacts with LMNA; the interaction forms an interior nucleoskeleton and the recruitment to DNA double-strand breaks. Ubiquitously expressed.

It localises to the nucleus. The protein resides in the nucleoplasm. Its subcellular location is the nucleus inner membrane. The protein localises to the nucleus matrix. Functionally, nuclear matrix protein involved in the immobilization of broken DNA ends and the suppression of chromosome translocation during DNA double-strand breaks (DSBs). Interacts with the nuclear lamina component LMNA, resulting in the formation of a nucleoskeleton that relocalizes to the DSB sites in a XRCC4-dependent manner and promotes the immobilization of the broken ends, thereby preventing chromosome translocation. Acts as a scaffold that allows the DNA repair protein XRCC4 and LMNA to assemble into a complex at the DSB sites. The chain is Non-homologous end joining factor IFFO1 from Homo sapiens (Human).